The following is a 75-amino-acid chain: Protein Tlp homolog (75 aa).

This sequence belongs to the Tlp family.

This Clostridium acetobutylicum (strain ATCC 824 / DSM 792 / JCM 1419 / IAM 19013 / LMG 5710 / NBRC 13948 / NRRL B-527 / VKM B-1787 / 2291 / W) protein is Protein Tlp homolog.